We begin with the raw amino-acid sequence, 394 residues long: Queuine tRNA-ribosyltransferase accessory subunit 2 (394 aa).

The Zn(2+) site is built by Cys-336, Cys-338, Cys-341, and His-367.

The protein belongs to the queuine tRNA-ribosyltransferase family. QTRT2 subfamily. As to quaternary structure, heterodimer of a catalytic subunit and an accessory subunit. The cofactor is Zn(2+).

Its subcellular location is the cytoplasm. Functionally, non-catalytic subunit of the queuine tRNA-ribosyltransferase (TGT) that catalyzes the base-exchange of a guanine (G) residue with queuine (Q) at position 34 (anticodon wobble position) in tRNAs with GU(N) anticodons (tRNA-Asp, -Asn, -His and -Tyr), resulting in the hypermodified nucleoside queuosine (7-(((4,5-cis-dihydroxy-2-cyclopenten-1-yl)amino)methyl)-7-deazaguanosine). The chain is Queuine tRNA-ribosyltransferase accessory subunit 2 from Ixodes scapularis (Black-legged tick).